The chain runs to 711 residues: MND1-interacting protein 1 (711 aa).

The stretch at Glu390–Asn648 forms a coiled coil. Disordered regions lie at residues Glu552–Asn571 and Arg602–Lys622. Residues Arg602–Ser611 are compositionally biased toward basic and acidic residues. Residues Cys653–Arg697 form an RING-type zinc finger.

In terms of assembly, interacts (via C-terminal domain) with MND1 and HOP2. Interacts with XRI1 (via C-terminal domain).

The polypeptide is MND1-interacting protein 1 (MIP1) (Arabidopsis thaliana (Mouse-ear cress)).